We begin with the raw amino-acid sequence, 473 residues long: FAD-dependent urate hydroxylase (473 aa).

Belongs to the HpyO family. In terms of assembly, homodimer. It depends on FAD as a cofactor.

The enzyme catalyses urate + NADH + O2 + H(+) = 5-hydroxyisourate + NAD(+) + H2O. It carries out the reaction urate + NADPH + O2 + H(+) = 5-hydroxyisourate + NADP(+) + H2O. The protein operates within purine metabolism; urate degradation. Catalyzes the hydroxylation of urate to 5-hydroxyisourate (HIU). Is likely to be involved in the urate degradation pathway to allantoin. Is slightly more efficient (about 2.6 times) with NADPH than NADH as the electron donor. The protein is FAD-dependent urate hydroxylase of Xanthomonas campestris pv. campestris (strain ATCC 33913 / DSM 3586 / NCPPB 528 / LMG 568 / P 25).